The chain runs to 935 residues: Potassium channel AKT1 (935 aa).

The Cytoplasmic segment spans residues 1 to 106; sequence MARWGAARMA…YDRRYRIWET (106 aa). Residues 107–127 form a helical membrane-spanning segment; sequence FLIVLVVYSAWVSPFEFGFIP. Over 128–136 the chain is Extracellular; that stretch reads KPTGALATA. A helical membrane pass occupies residues 137–157; the sequence is DNVVNAFFAVDIILTFFVAYL. Residues 158 to 178 are Cytoplasmic-facing; the sequence is DKMSYMLEDDPKKIAWRYSTT. A helical transmembrane segment spans residues 179–199; it reads WLVLDVASTIPSEFARRILPS. Topologically, residues 200-205 are extracellular; the sequence is KLRSYG. Residues 206–226 traverse the membrane as a helical; Voltage-sensor segment; the sequence is FFNMLRLWRLRRVSSLFSRLE. Topologically, residues 227 to 240 are cytoplasmic; that stretch reads KDRHFNYFWVRCAK. The chain crosses the membrane as a helical span at residues 241–261; it reads LICVTLFAVHCAACFYYLLAD. At 262–288 the chain is on the extracellular side; sequence RYPVPTSTWIGNYMADFHERSLWIRYV. The pore-forming intramembrane region spans 289–308; it reads TSVYWSITTLTTVGYGDLHA. The Extracellular portion of the chain corresponds to 309-312; it reads ENTR. The chain crosses the membrane as a helical span at residues 313 to 333; it reads EMIFNIFYMLFNLGLTAYLIG. Over 334 to 935 the chain is Cytoplasmic; the sequence is NMTNLVVHGT…WDAEKMKGKS (602 aa). A nucleoside 3',5'-cyclic phosphate is bound at residue 419–538; sequence LFQGVSNDLI…TIIMNNLIQF (120 aa). ANK repeat units lie at residues 565-594, 598-627, 631-660, 662-691, 695-724, and 728-757; these read DLPI…DPNE, DGHT…DPNA, EGKV…DLSS, DTGL…DVNR, DGTT…DIDK, and NGWT…ATAS. A disordered region spans residues 826 to 854; sequence SQAQRETDHPLSRGGLAATGSPNPSSGSR. Polar residues predominate over residues 845 to 854; sequence GSPNPSSGSR. The KHA domain occupies 859–935; that stretch reads RVTISCPEKG…WDAEKMKGKS (77 aa).

It belongs to the potassium channel family. Plant (TC 1.A.1.4) subfamily. The potassium channel is probably a homo- or heterotetrameric complex of pore-forming subunits. As to expression, highly expressed in the epidermis and endodermis of roots, and at lower level in cells of the vasculature and the cortex. Expressed in xylem parenchyma, phloem and mesophyll cells of leaves.

It is found in the membrane. Highly selective inward-rectifying potassium channel that mediates potassium uptake by plant roots. This chain is Potassium channel AKT1 (AKT1), found in Oryza sativa subsp. indica (Rice).